Here is a 722-residue protein sequence, read N- to C-terminus: Polyribonucleotide nucleotidyltransferase (722 aa).

2 residues coordinate Mg(2+): Asp-495 and Asp-501. Residues 562 to 621 (PRLLSFRIDPELIGTVIGPGGRTIKGITERTNTKIDIEDGGIVTIASHDGVAAEEAQKII) form the KH domain. Residues 631 to 699 (GEVFTGSITR…NRGRINLTLR (69 aa)) form the S1 motif domain.

Belongs to the polyribonucleotide nucleotidyltransferase family. Mg(2+) is required as a cofactor.

Its subcellular location is the cytoplasm. It carries out the reaction RNA(n+1) + phosphate = RNA(n) + a ribonucleoside 5'-diphosphate. In terms of biological role, involved in mRNA degradation. Catalyzes the phosphorolysis of single-stranded polyribonucleotides processively in the 3'- to 5'-direction. This chain is Polyribonucleotide nucleotidyltransferase, found in Prochlorococcus marinus (strain SARG / CCMP1375 / SS120).